A 148-amino-acid chain; its full sequence is Small ribosomal subunit protein uS13 (148 aa).

The interval 128–148 (RGQRTKSTGRRGSTIGVRKKK) is disordered.

It belongs to the universal ribosomal protein uS13 family. As to quaternary structure, part of the 30S ribosomal subunit. Forms a loose heterodimer with protein S19. Forms two bridges to the 50S subunit in the 70S ribosome.

Its function is as follows. Located at the top of the head of the 30S subunit, it contacts several helices of the 16S rRNA. In the 70S ribosome it contacts the 23S rRNA (bridge B1a) and protein L5 of the 50S subunit (bridge B1b), connecting the 2 subunits; these bridges are implicated in subunit movement. This chain is Small ribosomal subunit protein uS13, found in Methanococcoides burtonii (strain DSM 6242 / NBRC 107633 / OCM 468 / ACE-M).